The chain runs to 220 residues: Small ribosomal subunit protein eS1 (220 aa).

It belongs to the eukaryotic ribosomal protein eS1 family.

In Methanococcus vannielii (strain ATCC 35089 / DSM 1224 / JCM 13029 / OCM 148 / SB), this protein is Small ribosomal subunit protein eS1.